Consider the following 138-residue polypeptide: Large ribosomal subunit protein uL16 (138 aa).

It belongs to the universal ribosomal protein uL16 family. As to quaternary structure, part of the 50S ribosomal subunit.

In terms of biological role, binds 23S rRNA and is also seen to make contacts with the A and possibly P site tRNAs. This chain is Large ribosomal subunit protein uL16, found in Ureaplasma parvum serovar 3 (strain ATCC 27815 / 27 / NCTC 11736).